Here is a 422-residue protein sequence, read N- to C-terminus: MAMRTRLTWQQEKCLQNYFGGKRFCLLYKASVQKFSHQNLLCTCENQGPTMIVVYSEKCVIGMYLKEGFQGKDVSITIFALQETGFSLCAKGPDSPYLLFHKRKTNDFSILLDEKAVIVSSAICKMLQLTARNNVIPIQECEAFRCEELLDERKTRGIAVLHSNLLQALRDYKPYGDLVQQTRVLLLGPIGAGKSSFVNSVKSVFKGSITHQILVGCDEDGISDKYRTYSIKAKDDSDPLPFILCDSLGLGENAGLHTDDVWHILKGHTPDRYQFDSMKPITSNHPNYTHDPLLKDRIHCVVFVFDINSFEMHSSELVAKIKKIRRDLIKHGILHLALLTHVDSLDLITKEDMTDIYNYSPVKSKLEAFHGVFGFALSDILVVSNYVSEWQLDPVKDMLILSALKEILYTANEFLEDLPLNK.

Positions 1 to 147 (MAMRTRLTWQ…IQECEAFRCE (147 aa)) constitute a TLDc domain.

The protein belongs to the IFI44 family.

It is found in the cytoplasm. Functionally, this protein aggregates to form microtubular structures. This chain is Interferon-induced protein 44 (Ifi44), found in Mus musculus (Mouse).